The primary structure comprises 382 residues: D-galactonate dehydratase (382 aa).

Residue Asp183 participates in Mg(2+) binding. His185 functions as the Proton donor in the catalytic mechanism. Mg(2+) is bound by residues Glu209 and Glu235. The Proton acceptor role is filled by His285.

The protein belongs to the mandelate racemase/muconate lactonizing enzyme family. GalD subfamily. The cofactor is Mg(2+).

It catalyses the reaction D-galactonate = 2-dehydro-3-deoxy-D-galactonate + H2O. The protein operates within carbohydrate acid metabolism; D-galactonate degradation; D-glyceraldehyde 3-phosphate and pyruvate from D-galactonate: step 1/3. In terms of biological role, catalyzes the dehydration of D-galactonate to 2-keto-3-deoxy-D-galactonate. The sequence is that of D-galactonate dehydratase from Xanthomonas campestris pv. campestris (strain 8004).